Here is a 407-residue protein sequence, read N- to C-terminus: Peptidase T (407 aa).

Position 82 (His-82) interacts with Zn(2+). Asp-84 is an active-site residue. Zn(2+) is bound at residue Asp-143. The active-site Proton acceptor is Glu-177. Positions 178, 200, and 382 each coordinate Zn(2+).

Belongs to the peptidase M20B family. Requires Zn(2+) as cofactor.

Its subcellular location is the cytoplasm. The catalysed reaction is Release of the N-terminal residue from a tripeptide.. Functionally, cleaves the N-terminal amino acid of tripeptides. This is Peptidase T from Streptococcus pyogenes serotype M6 (strain ATCC BAA-946 / MGAS10394).